Reading from the N-terminus, the 501-residue chain is Cytochrome P450 2J1 (501 aa).

Residue C447 coordinates heme.

It belongs to the cytochrome P450 family. The cofactor is heme. Small intestine.

The protein localises to the endoplasmic reticulum membrane. Its subcellular location is the microsome membrane. The catalysed reaction is an organic molecule + reduced [NADPH--hemoprotein reductase] + O2 = an alcohol + oxidized [NADPH--hemoprotein reductase] + H2O + H(+). Its function is as follows. Catalyzes the N-demethylation of benzphetamine to formaldehyde. This chain is Cytochrome P450 2J1 (CYP2J1), found in Oryctolagus cuniculus (Rabbit).